Consider the following 343-residue polypeptide: Interferon-inducible protein AIM2 (343 aa).

Residues Met1–Lys87 form the Pyrin domain. One can recognise an HIN-200 domain in the interval Met138–Ile337.

This sequence belongs to the HIN-200 family. As to quaternary structure, self-associates; forms homooligomers in response to cytosolic double-stranded DNA (dsDNA) and the dsDNA seems to serve as oligomerization platform. Component of AIM2 inflammasome, which consists of a signal sensor component (AIM2), an adapter (PYCARD/ASC), which recruits an effector pro-inflammatory caspase (CASP1). Interacts (via pyrin domain) with PYCARD/ASC (via pyrin domain); interaction is direct. Component of the AIM2 PANoptosome complex, a multiprotein complex that drives inflammatory cell death (PANoptosis). Interacts with PYDC5; disrupts assembly of the AIM2 inflammasome complex. Interacts with EIF2AK2/PKR. Interacts with MAPRE1. Interacts with IFI16. Interacts with isoform IFI16-beta of IFI16; preventing the interaction between AIM2 and PYCARD/ASC. Interacts with RACK1; promoting association with PP2A phosphatase and dephosphorylation of AKT1. Interacts with TRIM11; promoting AIM2 recruitment to autophagosomes and autophagy-dependent degradation. (Microbial infection) Interacts with human herpesvirus 8 protein SOX/ORF37; this interaction inhibits AIM2 polymerization and subsequent inflammasome activation. Degraded via selective autophagy following interaction with TRIM11. In terms of tissue distribution, expressed in spleen, small intestine, peripheral blood leukocytes, and testis.

It is found in the cytoplasm. The protein resides in the inflammasome. Its subcellular location is the nucleus. Inactive in absence of double-stranded DNA (dsDNA). Homooligomerizes upon binding to dsDNA, dsDNA serving as an oligomerization platform. AIM2 requires large dsDNA to generate a structural template that couples dsDNA ligand-binding and homooligomerization. Homooligomerization is followed by recruitment of PYCARD/ASC to initiate speck formation (nucleation). AIM2 and PYCARD/ASC homooligomer filaments assemble bidirectionally and the recognition between AIM2 and PYCARD/ASC oligomers occurs in a head-to-tail manner. Clustered PYCARD/ASC nucleates the formation of CASP1 filaments through the interaction of their respective CARD domains, acting as a platform for CASP1 polymerization and activation. Active CASP1 then specifically processes protein precursors, such as gasdermin-D (GSDMD), IL1B and IL18, leading to the release of mature cytokines in the extracellular milieu or pyroptosis, depending on cell type. AIM2 can be activated in response to events that cause genomic DNA (HIV protease inhibitor nelfinavir) or mitochondrial DNA release in the cytoplasm (such as Perfluoroalkyl substance pollutants or cholesterol overload). Activation of the AIM2 inflammasome is inhibited by isoform IFI16-beta of IFI16, which prevents the interaction between AIM2 and PYCARD/ASC. Activation of the AIM2 inflammasome is inhibited by TRIM11, which promotes autophagy-dependent degradation of AIM2. Its function is as follows. Sensor component of the AIM2 inflammasome, which mediates inflammasome activation in response to the presence of double-stranded DNA (dsDNA) in the cytosol, leading to subsequent pyroptosis. Inflammasomes are supramolecular complexes that assemble in the cytosol in response to pathogens and other damage-associated signals and play critical roles in innate immunity and inflammation. Acts as a recognition receptor (PRR): specifically recognizes and binds dsDNA in the cytosol, and mediates the formation of the inflammasome polymeric complex composed of AIM2, CASP1 and PYCARD/ASC. Recruitment of pro-caspase-1 (proCASP1) to the AIM2 inflammasome promotes caspase-1 (CASP1) activation, which subsequently cleaves and activates inflammatory cytokines IL1B and IL18 and gasdermin-D (GSDMD), promoting cytokine secretion. In some cells, CASP1 activation mediates cleavage and activation of GSDMD, triggering pyroptosis without promoting cytokine secretion. Detects cytosolic dsDNA of viral and bacterial origin in a non-sequence-specific manner. Involved in the DNA damage response caused by acute ionizing radiation by mediating pyroptosis of intestinal epithelial cells and bone marrow cells in response to double-strand DNA breaks. Mechanistically, AIM2 senses DNA damage in the nucleus to mediate inflammasome assembly and inflammatory cell death. Also acts as a regulator of neurodevelopment via its role in the DNA damage response: acts by promoting neural cell death in response to DNA damage in the developing brain, thereby purging genetically compromised cells of the central nervous system. Pyroptosis mediated by the AIM2 inflammasome in response to DNA damage is dependent on GSDMD without involving IL1B and IL18 cytokine secretion. Also acts as a mediator of pyroptosis, necroptosis and apoptosis (PANoptosis), an integral part of host defense against pathogens, in response to bacterial infection. Can also trigger PYCARD/ASC-dependent, caspase-1-independent cell death that involves caspase-8 (CASP8). Also acts as a tumor suppressor independently of its role in inflammatory response. Able to suppress overt cell proliferation in enterocytes: restricts stem cell proliferation in the intestinal mucosa in an inflammasome-independent manner, contributing to a decrease in the likelihood of colorectal cancer development. AIM2 suppresses cell proliferation by inhibiting phosphorylation of AKT1 at 'Ser-473', preventing AKT1 activation and AKT-mTOR signaling pathway. Inhibits AKT1 phosphorylation both by inhibiting the activity of PRKDC/DNA-PK kinase and promoting dephosphorylation by PP2A phosphatase. Also acts as a key regulator of regulatory T-cells (Treg) homeostasis by promoting their stability: acts by preventing AKT1 activation. Its role in Treg homeostasis is important to restain autoimmune diseases. This Homo sapiens (Human) protein is Interferon-inducible protein AIM2.